A 1043-amino-acid chain; its full sequence is Unconventional myosin-Ia (1043 aa).

In terms of domain architecture, Myosin motor spans 8-694; the sequence is VGVEDLILLE…TLFYLEEQRR (687 aa). 101 to 108 provides a ligand contact to ATP; that stretch reads GESGAGKT. Residues 571 to 593 form an actin-binding region; it reads VAVLMKNLYSKNPNYIRCIKPND. 3 consecutive IQ domains span residues 697–719, 720–742, and 743–772; these read LQQL…HYQQ, MRKS…HYGK, and IRSS…SGAA. Residues 858-1042 form the TH1 domain; it reads KASYPQSVPI…KGSNAMEVTV (185 aa).

Belongs to the TRAFAC class myosin-kinesin ATPase superfamily. Myosin family. In terms of processing, phosphorylated by ALPK1.

Its function is as follows. Involved in directing the movement of organelles along actin filaments. This is Unconventional myosin-Ia (Myo1a) from Mus musculus (Mouse).